Consider the following 1048-residue polypeptide: Malignant fibrous histiocytoma-amplified sequence 1 homolog (1048 aa).

N-acetylalanine is present on alanine 2. 13 LRR repeats span residues 60 to 81 (DIEVLNLGNNGLEDVPEGLGSA), 84 to 105 (SLRVLVLRRNRFARLPPAVAEL), 108 to 129 (HLTELDVSHNRLTILGAEVVSA), 132 to 153 (ELRKLNLSHNQLPALPAQLGAL), 155 to 176 (HLEELDVSFNRLAHLPDSFSCL), 178 to 199 (HLRTLDVDHNQLTAFPQQLLQL), 201 to 222 (ALEELDVSSNRLRGLPEDISAL), 224 to 246 (ALKILWLSGAELGTLPRGFCELA), 247 to 268 (SLESLMLDNNGLQALPDEFSRL), 270 to 292 (RLKMLNLSSNLFEEFPAALLPLA), 293 to 314 (GLEELYLSRNQLTSVPSLIAGL), 316 to 337 (RLLTLWLDNNRIRYLPDSIVEL), and 339 to 360 (GLEELVLQGNQIAVLPDNFGQL). The required for interaction with PJA2 stretch occupies residues 60 to 360 (DIEVLNLGNN…AVLPDNFGQL (301 aa)). A required for interaction with PPP2R2A region spans residues 60 to 645 (DIEVLNLGNN…DKLLSVAEHR (586 aa)). Residues 399–645 (QPAVQPRLKL…DKLLSVAEHR (247 aa)) form the Roc domain. An N6-acetyllysine modification is found at lysine 597.

As to quaternary structure, interacts with RAF1. Interacts with HSPD1. Interacts with PPP2CA; retains PPP2CA into the cytoplasm and excludes it from the nucleus. Interacts with PPP2R2A; the interaction is direct. Interacts with PJA2. Ubiquitinated. Ubiquitination by PJA2 does not lead MFHAS1 to proteasomal degradation but positively regulates its function in polarization of macrophages.

It localises to the cytoplasm. Probable GTP-binding protein. Functions in innate immunity and more specifically the inflammatory response as a regulator of the Toll-like receptor TLR2 and TLR4 signaling pathways. Negatively regulates the part of the TLR4 signaling pathway that leads to the activation of the transcription factor AP-1. By retaining the phosphatase complex PP2A into the cytoplasm, prevents the dephosphorylation of the AP-1 subunit JUN which is required for proper activation of the transcription factor. Both inhibits and activates the TLR2-dependent signaling pathway. Positively regulates the TLR2 signaling pathway to activate specifically the downstream p38 and JNK MAP kinases and promote the polarization of macrophages toward the pro-inflammatory M1 phenotype. It may also play a role in the regulation of inflammation induced by high glucose through the PKB/AKT signaling pathway. Also involved in erythrocyte differentiation through activation of the ERK1/ERK2 signaling pathway. This is Malignant fibrous histiocytoma-amplified sequence 1 homolog from Mus musculus (Mouse).